The chain runs to 232 residues: Thiamine import ATP-binding protein ThiQ (232 aa).

In terms of domain architecture, ABC transporter spans 2 to 230 (LKLTDITWLY…KASASALLGI (229 aa)). 32 to 39 (GPSGAGKS) is a binding site for ATP.

It belongs to the ABC transporter superfamily. Thiamine importer (TC 3.A.1.19.1) family. In terms of assembly, the complex is composed of two ATP-binding proteins (ThiQ), two transmembrane proteins (ThiP) and a solute-binding protein (ThiB).

It is found in the cell inner membrane. It carries out the reaction thiamine(out) + ATP + H2O = thiamine(in) + ADP + phosphate + H(+). Functionally, part of the ABC transporter complex ThiBPQ involved in thiamine import. Responsible for energy coupling to the transport system. This chain is Thiamine import ATP-binding protein ThiQ, found in Escherichia coli O6:H1 (strain CFT073 / ATCC 700928 / UPEC).